Here is a 341-residue protein sequence, read N- to C-terminus: ATPase GET3 (341 aa).

ATP is bound at residue Lys34 to Thr41. Residue Asp63 is part of the active site. ATP contacts are provided by Glu245 and Asn272. Zn(2+) is bound by residues Cys283 and Cys286.

The protein belongs to the arsA ATPase family. In terms of assembly, homodimer.

The protein localises to the cytoplasm. Its subcellular location is the endoplasmic reticulum. In terms of biological role, ATPase required for the post-translational delivery of tail-anchored (TA) proteins to the endoplasmic reticulum. Recognizes and selectively binds the transmembrane domain of TA proteins in the cytosol. This complex then targets to the endoplasmic reticulum by membrane-bound receptors, where the tail-anchored protein is released for insertion. This process is regulated by ATP binding and hydrolysis. ATP binding drives the homodimer towards the closed dimer state, facilitating recognition of newly synthesized TA membrane proteins. ATP hydrolysis is required for insertion. Subsequently, the homodimer reverts towards the open dimer state, lowering its affinity for the membrane-bound receptor, and returning it to the cytosol to initiate a new round of targeting. In Paracoccidioides brasiliensis (strain Pb18), this protein is ATPase GET3.